Consider the following 1525-residue polypeptide: Receptor-type guanylate cyclase Gyc76C (1525 aa).

Residues 1-19 (MTRWPFNLLLLLSVAVRDC) form the signal peptide. Over 20–493 (SNHRTVLTVG…KKDDTHYTST (474 aa)) the chain is Extracellular. N-linked (GlcNAc...) asparagine glycans are attached at residues Asn-74, Asn-184, Asn-222, Asn-338, Asn-383, Asn-394, Asn-416, Asn-428, and Asn-458. The chain crosses the membrane as a helical span at residues 494 to 514 (VAAVVLGVLLFCSGVITMSIY). The Cytoplasmic segment spans residues 515–1525 (RKWKIELEIE…AAARDRESIV (1011 aa)). One can recognise a Protein kinase domain in the interval 547–824 (PSKVSLMSAQ…SVIRNRLKKM (278 aa)). Residues 553–561 (MSAQSYGSR) and Lys-581 contribute to the ATP site. The region spanning 896–1026 (TIYFSDIVGF…DTVNTASRME (131 aa)) is the Guanylate cyclase domain. Asp-901, Ile-902, and Asp-945 together coordinate Mg(2+). Disordered stretches follow at residues 1122 to 1168 (GSRR…NGLG), 1192 to 1217 (ETNE…LVRQ), and 1256 to 1308 (ESRS…VHSS). A compositionally biased stretch (basic and acidic residues) spans 1147-1162 (ESPRMVSKRDRDRERP). The segment covering 1202–1212 (GGSGGVSGSGS) has biased composition (gly residues). The span at 1282-1308 (LSKNNSRSLDTGVSLISGNPNGEVHSS) shows a compositional bias: polar residues.

The protein belongs to the adenylyl cyclase class-4/guanylyl cyclase family. Interacts with the semaphorin 1A receptor PlexA; PlexA enhances Gyc76C catalytic activity. Interacts with the PDZ domain-containing protein kermit; kermit increases cell surface expression of Gyc76C. In terms of tissue distribution, in the adult, widely distributed in the head and thorax with highest levels in the optic lobe and central brain and expression also detected in the retina. Expressed at similar levels in adult head and body. In females, highly expressed in oocytes with lower levels in the digestive tract. In mid-embryogenesis, enriched in the circular visceral mesoderm that overlies the migrating salivary gland and in the fat body that underlies the gland but at background levels in the gland itself. In late embryogenesis, detected in the mature salivary gland, in the somatic body wall muscles and the tendon cells to which the muscles attach, and in the constricting midgut. Also expressed in migrating tracheal cells at mid-embryogenesis and in the developed trachea at the end of embryogenesis with enrichment in the apical domains.

It localises to the cell membrane. The enzyme catalyses GTP = 3',5'-cyclic GMP + diphosphate. Functionally, guanylate cyclase involved in the production of the second messenger cGMP. Acts as a receptor for the NPLP1-4 peptide and modulates the innate immune IMD pathway in response to salt stress by inducing nuclear translocation of NF-kappa-B protein Rel which leads to increased expression of the antimicrobial peptide diptericin. Plays a role in Sema-1a-mediated axon repulsion which is required for the correct establishment of neuromuscular connectivity. Required in developing embryonic somatic muscle for correct patterning of ventral and lateral muscles and for localization of integrin beta-ps at developing dorsal muscle myotendinous junctions. Required for invagination, migration and lumen shape of the embryonic salivary gland by regulating the localization of the integrin-binding protein rhea/Talin to the visceral mesoderm surrounding the gland and maintaining the laminin matrix. Required in the developing wing to regulate extracellular matrix (ECM) organization by activating the cGMP-dependent protein kinase For which represses the activity of matrix metalloproteases such as Mmp2 and decreases ECM matrix reorganization. This is Receptor-type guanylate cyclase Gyc76C from Drosophila melanogaster (Fruit fly).